A 713-amino-acid chain; its full sequence is Phosphoribosylformylglycinamidine synthase subunit PurL (713 aa).

His32 is a catalytic residue. Tyr35 lines the ATP pocket. Position 76 (Glu76) interacts with Mg(2+). Substrate is bound by residues 77-80 and Arg99; that span reads SHNH. Catalysis depends on His78, which acts as the Proton acceptor. Asp100 is a Mg(2+) binding site. A substrate-binding site is contributed by Gln224. Asp252 is a Mg(2+) binding site. Position 296-298 (296-298) interacts with substrate; sequence ESQ. 2 residues coordinate ATP: Asp471 and Gly508. Residue Asn509 coordinates Mg(2+). Substrate is bound at residue Ser511.

This sequence belongs to the FGAMS family. In terms of assembly, monomer. Part of the FGAM synthase complex composed of 1 PurL, 1 PurQ and 2 PurS subunits.

Its subcellular location is the cytoplasm. It catalyses the reaction N(2)-formyl-N(1)-(5-phospho-beta-D-ribosyl)glycinamide + L-glutamine + ATP + H2O = 2-formamido-N(1)-(5-O-phospho-beta-D-ribosyl)acetamidine + L-glutamate + ADP + phosphate + H(+). It participates in purine metabolism; IMP biosynthesis via de novo pathway; 5-amino-1-(5-phospho-D-ribosyl)imidazole from N(2)-formyl-N(1)-(5-phospho-D-ribosyl)glycinamide: step 1/2. Its function is as follows. Part of the phosphoribosylformylglycinamidine synthase complex involved in the purines biosynthetic pathway. Catalyzes the ATP-dependent conversion of formylglycinamide ribonucleotide (FGAR) and glutamine to yield formylglycinamidine ribonucleotide (FGAM) and glutamate. The FGAM synthase complex is composed of three subunits. PurQ produces an ammonia molecule by converting glutamine to glutamate. PurL transfers the ammonia molecule to FGAR to form FGAM in an ATP-dependent manner. PurS interacts with PurQ and PurL and is thought to assist in the transfer of the ammonia molecule from PurQ to PurL. The sequence is that of Phosphoribosylformylglycinamidine synthase subunit PurL from Thermococcus sibiricus (strain DSM 12597 / MM 739).